We begin with the raw amino-acid sequence, 227 residues long: MAYPFQLGLQDATSPIMEELLHFHDHTLMIVFLISSLVLYIISLMLTTKLTHTSTMDAQEVETVWTILPAIILILIALPSLRILYMMDEINNPSLTVKTMGHQWYWSYEYTDYEDLNFDSYMIPTQELKPGELRLLEVDNRVVLPMEMTVRMLVSSEDVLHSWAVPSLGLKTDAIPGRLNQTTLMAMRPGLYYGQCSEICGSNHSFMPIVLEMVPLSYFETWSALMV.

Over 1-14 (MAYPFQLGLQDATS) the chain is Mitochondrial intermembrane. Residues 15-45 (PIMEELLHFHDHTLMIVFLISSLVLYIISLM) traverse the membrane as a helical segment. Residues 46–59 (LTTKLTHTSTMDAQ) lie on the Mitochondrial matrix side of the membrane. Residues 60–87 (EVETVWTILPAIILILIALPSLRILYMM) form a helical membrane-spanning segment. Residues 88 to 227 (DEINNPSLTV…YFETWSALMV (140 aa)) are Mitochondrial intermembrane-facing. Cu cation contacts are provided by H161, C196, E198, C200, H204, and M207. E198 is a binding site for Mg(2+). Y218 is modified (phosphotyrosine).

The protein belongs to the cytochrome c oxidase subunit 2 family. Component of the cytochrome c oxidase (complex IV, CIV), a multisubunit enzyme composed of 14 subunits. The complex is composed of a catalytic core of 3 subunits MT-CO1, MT-CO2 and MT-CO3, encoded in the mitochondrial DNA, and 11 supernumerary subunits COX4I, COX5A, COX5B, COX6A, COX6B, COX6C, COX7A, COX7B, COX7C, COX8 and NDUFA4, which are encoded in the nuclear genome. The complex exists as a monomer or a dimer and forms supercomplexes (SCs) in the inner mitochondrial membrane with NADH-ubiquinone oxidoreductase (complex I, CI) and ubiquinol-cytochrome c oxidoreductase (cytochrome b-c1 complex, complex III, CIII), resulting in different assemblies (supercomplex SCI(1)III(2)IV(1) and megacomplex MCI(2)III(2)IV(2)). Found in a complex with TMEM177, COA6, COX18, COX20, SCO1 and SCO2. Interacts with TMEM177 in a COX20-dependent manner. Interacts with COX20. Interacts with COX16. Cu cation is required as a cofactor.

It localises to the mitochondrion inner membrane. It carries out the reaction 4 Fe(II)-[cytochrome c] + O2 + 8 H(+)(in) = 4 Fe(III)-[cytochrome c] + 2 H2O + 4 H(+)(out). Component of the cytochrome c oxidase, the last enzyme in the mitochondrial electron transport chain which drives oxidative phosphorylation. The respiratory chain contains 3 multisubunit complexes succinate dehydrogenase (complex II, CII), ubiquinol-cytochrome c oxidoreductase (cytochrome b-c1 complex, complex III, CIII) and cytochrome c oxidase (complex IV, CIV), that cooperate to transfer electrons derived from NADH and succinate to molecular oxygen, creating an electrochemical gradient over the inner membrane that drives transmembrane transport and the ATP synthase. Cytochrome c oxidase is the component of the respiratory chain that catalyzes the reduction of oxygen to water. Electrons originating from reduced cytochrome c in the intermembrane space (IMS) are transferred via the dinuclear copper A center (CU(A)) of subunit 2 and heme A of subunit 1 to the active site in subunit 1, a binuclear center (BNC) formed by heme A3 and copper B (CU(B)). The BNC reduces molecular oxygen to 2 water molecules using 4 electrons from cytochrome c in the IMS and 4 protons from the mitochondrial matrix. This chain is Cytochrome c oxidase subunit 2 (MT-CO2), found in Canis mesomelas elongae (Eastern African black-backed jackal).